Reading from the N-terminus, the 700-residue chain is Polyribonucleotide nucleotidyltransferase (700 aa).

The Mg(2+) site is built by Asp-485 and Asp-491. The KH domain maps to 552-611; sequence PRITVIKINPEKIRDVIGKGGAVIRALTEETGTTIELEDDGTVKIASSNGEATKEAIRRI. Residues 621 to 689 form the S1 motif domain; it reads GRIYNGKVIR…RQGRVRLSIK (69 aa).

Belongs to the polyribonucleotide nucleotidyltransferase family. As to quaternary structure, component of the RNA degradosome, which is a multiprotein complex involved in RNA processing and mRNA degradation. It depends on Mg(2+) as a cofactor.

It is found in the cytoplasm. It carries out the reaction RNA(n+1) + phosphate = RNA(n) + a ribonucleoside 5'-diphosphate. In terms of biological role, involved in mRNA degradation. Catalyzes the phosphorolysis of single-stranded polyribonucleotides processively in the 3'- to 5'-direction. The polypeptide is Polyribonucleotide nucleotidyltransferase (Shewanella baltica (strain OS185)).